Reading from the N-terminus, the 291-residue chain is Lipoyl synthase (291 aa).

Positions 36, 41, 47, 62, 66, 69, and 275 each coordinate [4Fe-4S] cluster. The 217-residue stretch at phenylalanine 48 to lysine 264 folds into the Radical SAM core domain.

It belongs to the radical SAM superfamily. Lipoyl synthase family. Requires [4Fe-4S] cluster as cofactor.

Its subcellular location is the cytoplasm. The enzyme catalyses [[Fe-S] cluster scaffold protein carrying a second [4Fe-4S](2+) cluster] + N(6)-octanoyl-L-lysyl-[protein] + 2 oxidized [2Fe-2S]-[ferredoxin] + 2 S-adenosyl-L-methionine + 4 H(+) = [[Fe-S] cluster scaffold protein] + N(6)-[(R)-dihydrolipoyl]-L-lysyl-[protein] + 4 Fe(3+) + 2 hydrogen sulfide + 2 5'-deoxyadenosine + 2 L-methionine + 2 reduced [2Fe-2S]-[ferredoxin]. It participates in protein modification; protein lipoylation via endogenous pathway; protein N(6)-(lipoyl)lysine from octanoyl-[acyl-carrier-protein]: step 2/2. Functionally, catalyzes the radical-mediated insertion of two sulfur atoms into the C-6 and C-8 positions of the octanoyl moiety bound to the lipoyl domains of lipoate-dependent enzymes, thereby converting the octanoylated domains into lipoylated derivatives. The chain is Lipoyl synthase from Caldicellulosiruptor bescii (strain ATCC BAA-1888 / DSM 6725 / KCTC 15123 / Z-1320) (Anaerocellum thermophilum).